A 539-amino-acid polypeptide reads, in one-letter code: MLLPLTKLKPRAKVAVVGGGVSGLCFTYFLSKLRPDVEITLFESQNRTGGWIYSCNTRDMSGNPIMLEKGPRTLRGVSDGTVLIMDTLKDLGKEAVIQSIDKGCIADKKFLLDPSDKLVQVPNSISTTVKFLLNPLGKGLITGMMGEWFRKKSPHPGQDESVESICDRRFGNNYISNNMISALLRGIYGDDVSLLSAKRTFKKIYYNELKHGSNTQAMIDNMRGKSRSKKTENLHQSLTGCLNDYSNAFGKDRSKLLDLSNTLKKYPMLGLAGGLETFPKIVRNALNEFKNVKIVTGNPVTQIMKRPANETTIGLKAKSGDQYETFDHLRLTITPPKIAKLLPKDQNSLSKLLDEIQSNTIILVNYYLPNKDVIDADLQGFGYLVPKSNKNPGKLLGVIFDSVIERNFKPLFDKLSTNPNALNKYTKVTAMIGGCMLNEHGVPVVPSREVTINAVKDALNNHLGISNKDLEAGQWEFTIADRCLPRFHVGYDAWQERAERKLQESYGQTVSVGGMGFSRSPGVPDVIVDGFNDALQLSK.

FAD contacts are provided by residues 18-23 (GGGVSG), 43-44 (ES), Trp-51, 70-73 (GPRT), Val-300, and 521-523 (PGV).

Belongs to the protoporphyrinogen/coproporphyrinogen oxidase family. Protoporphyrinogen oxidase subfamily. It depends on FAD as a cofactor.

The protein localises to the mitochondrion inner membrane. The enzyme catalyses protoporphyrinogen IX + 3 O2 = protoporphyrin IX + 3 H2O2. Its pathway is porphyrin-containing compound metabolism; protoporphyrin-IX biosynthesis; protoporphyrin-IX from protoporphyrinogen-IX: step 1/1. Functionally, catalyzes the 6-electron oxidation of protoporphyrinogen-IX to form protoporphyrin-IX. This chain is Protoporphyrinogen oxidase, found in Saccharomyces cerevisiae (strain ATCC 204508 / S288c) (Baker's yeast).